Consider the following 346-residue polypeptide: MVSEAPPFWWTKADWRAYALWPFAWAYGRVAAIRMDRARRAMPPVPLICVGNFTVGGAGKTPTAIALAQAAKARGLKPGFLSRGYGGSLDVTTVVDPGHHRARDVGDEPLLLAREALTVVCRRRVDGARRLAAEGADIIIMDDGFQSARLTFDFALLVIDSMRGIGNGHLVPSGPVRAPIADQLRHATALLKIGHGPAADRLIRRAARAGKAIYVADTVRLDDGSMSGVKVLAWAGIADPEKFYRTVRDAGAIVEETRSFPDHHHFSDDEIADLIDRAASQGYTLVTTAKDMVRLEPGHGRAAELAAKSRVIEIEVRFDDPLAPAKIIDATLAAARARKLRANGKG.

54-61 lines the ATP pocket; sequence TVGGAGKT.

The protein belongs to the LpxK family.

It carries out the reaction a lipid A disaccharide + ATP = a lipid IVA + ADP + H(+). It functions in the pathway glycolipid biosynthesis; lipid IV(A) biosynthesis; lipid IV(A) from (3R)-3-hydroxytetradecanoyl-[acyl-carrier-protein] and UDP-N-acetyl-alpha-D-glucosamine: step 6/6. Its function is as follows. Transfers the gamma-phosphate of ATP to the 4'-position of a tetraacyldisaccharide 1-phosphate intermediate (termed DS-1-P) to form tetraacyldisaccharide 1,4'-bis-phosphate (lipid IVA). The polypeptide is Tetraacyldisaccharide 4'-kinase (Sinorhizobium fredii (strain NBRC 101917 / NGR234)).